A 147-amino-acid chain; its full sequence is MAKEITGYVKLQIKGGAANPSPPVGPALGSKGLNIMEFCKQFNARTQDKPGVLLPVLITVYTDKSFDFVVKTPPAAILLAEAAKIKKGSAEPNRVKVGSVNWDQIRTIAETKMPDLNAFKIESAMKMVAGTARSMGLTVSGKAPWEN.

It belongs to the universal ribosomal protein uL11 family. Part of the ribosomal stalk of the 50S ribosomal subunit. Interacts with L10 and the large rRNA to form the base of the stalk. L10 forms an elongated spine to which L12 dimers bind in a sequential fashion forming a multimeric L10(L12)X complex. One or more lysine residues are methylated.

In terms of biological role, forms part of the ribosomal stalk which helps the ribosome interact with GTP-bound translation factors. The chain is Large ribosomal subunit protein uL11 from Cytophaga hutchinsonii (strain ATCC 33406 / DSM 1761 / CIP 103989 / NBRC 15051 / NCIMB 9469 / D465).